The primary structure comprises 196 residues: MTKLIVGLGNPGEEHTEDRHNAGFWFLDVLAKQLNSRFESEKRFHGKVAKAKWEGEDLFLLKPSTYMNLSGQSVGALCRFHKITPAEILVVQDELDLKPGTARLKLGGGTGGHNGLKDIQAHLSTPEYWRLRLGIGHPRDLAGDGRPMDVADYVLRRPQLAEQKMIDASIENGLQILPLFLKGDTQTAMMELHSKA.

Histidine 15 is a tRNA binding site. Histidine 20 serves as the catalytic Proton acceptor. The tRNA site is built by tyrosine 66, asparagine 68, and asparagine 114.

This sequence belongs to the PTH family. As to quaternary structure, monomer.

The protein localises to the cytoplasm. It catalyses the reaction an N-acyl-L-alpha-aminoacyl-tRNA + H2O = an N-acyl-L-amino acid + a tRNA + H(+). Its function is as follows. Hydrolyzes ribosome-free peptidyl-tRNAs (with 1 or more amino acids incorporated), which drop off the ribosome during protein synthesis, or as a result of ribosome stalling. Catalyzes the release of premature peptidyl moieties from peptidyl-tRNA molecules trapped in stalled 50S ribosomal subunits, and thus maintains levels of free tRNAs and 50S ribosomes. This chain is Peptidyl-tRNA hydrolase, found in Polynucleobacter asymbioticus (strain DSM 18221 / CIP 109841 / QLW-P1DMWA-1) (Polynucleobacter necessarius subsp. asymbioticus).